The chain runs to 134 residues: Methylglyoxal synthase (134 aa).

An MGS-like domain is found at Met-1–Glu-134. Substrate contacts are provided by residues His-8, Lys-12, Thr-34–Thr-37, and Ser-54–Gly-55. The Proton donor/acceptor role is filled by Asp-60. A substrate-binding site is contributed by His-87.

It belongs to the methylglyoxal synthase family.

The enzyme catalyses dihydroxyacetone phosphate = methylglyoxal + phosphate. Its function is as follows. Catalyzes the formation of methylglyoxal from dihydroxyacetone phosphate. In Listeria innocua serovar 6a (strain ATCC BAA-680 / CLIP 11262), this protein is Methylglyoxal synthase.